We begin with the raw amino-acid sequence, 1534 residues long: Slit homolog 1 protein (1534 aa).

Residues 1–33 form the signal peptide; that stretch reads MALTPGWGSSAGPVRPELWLLLWAAAWRLGASA. The region spanning 34–61 is the LRRNT domain; the sequence is CPALCTCTGTTVDCHGTGLQAIPKNIPR. LRR repeat units lie at residues 62 to 83, 86 to 107, 110 to 131, 134 to 155, 158 to 179, and 182 to 203; these read NTERLELNGNNITRIHKNDFAG, QLRVLQLMENQIGAVERGAFDD, ELERLRLNRNQLHMLPELLFQN, ALSRLDLSENAIQAIPRKAFRG, DLKNLQLDKNQISCIEEGAFRA, and GLEVLTLNNNNITTIPVSSFNH. An N-linked (GlcNAc...) asparagine glycan is attached at Asn-72. Asn-192 carries an N-linked (GlcNAc...) asparagine glycan. The 51-residue stretch at 215 to 265 folds into the LRRCT 1 domain; it reads NHLFCDCHLAWLSQWLRQRPTIGLFTQCSGPASLRGLNVAEVQKSEFSCSG. Residues 273 to 309 form the LRRNT 2 domain; sequence PTCTLSSGSCPAMCTCSNGIVDCRGKGLTAIPANLPE. Cys-286 and Cys-295 are joined by a disulfide. 5 LRR repeats span residues 310–331, 334–355, 358–379, 382–403, and 406–427; these read TMTEIRLELNGIKSIPPGAFSP, KLRRIDLSNNQIAEIAPDAFQG, SLNSLVLYGNKITDLPRGVFGG, TLQLLLLNANKINCIRPDAFQD, and NLSLLSLYDNKIQSLAKGTFTS. The N-linked (GlcNAc...) asparagine glycan is linked to Asn-406. Residues 439 to 489 form the LRRCT 2 domain; sequence NPFICDCNLKWLADFLRTNPIETSGARCASPRRLANKRIGQIKSKKFRCSA. 4 disulfide bridges follow: Cys-443/Cys-466, Cys-445/Cys-487, Cys-513/Cys-519, and Cys-517/Cys-526. One can recognise an LRRNT 3 domain in the interval 504–540; sequence NSECNSDVVCPHKCRCEANVVECSSLKLTKIPERIPQ. 5 LRR repeats span residues 541 to 562, 566 to 587, 590 to 611, 614 to 635, and 638 to 659; these read STAELRLNNNEISILEATGMFK, HLKKINLSNNKVSEIEDGAFEG, SVSELHLTANQLESIRSGMFRG, GLRTLMLRNNRISCIHNDSFTG, and NVRLLSLYDNQITTVSPGAFDT. A glycan (N-linked (GlcNAc...) asparagine) is linked at Asn-571. Asn-630 carries an N-linked (GlcNAc...) asparagine glycan. The LRRCT 3 domain maps to 671–721; it reads NPFNCNCQLAWLGGWLRKRKIVTGNPRCQNPDFLRQIPLQDVAFPDFRCEE. 2 disulfide bridges follow: Cys-675/Cys-698 and Cys-677/Cys-719. The 37-residue stretch at 725–761 folds into the LRRNT 4 domain; the sequence is EGGCLPRPQCPQECACLDTVVRCSNKHLRALPKGIPK. 3 N-linked (GlcNAc...) asparagine glycosylation sites follow: Asn-762, Asn-801, and Asn-806. 4 LRR repeats span residues 762–783, 785–806, 809–830, and 833–854; these read NVTELYLDGNQFTLVPGQLSTF, YLQLVDLSNNKISSLSNSSFTN, QLTTLILSYNALQCIPPLAFQG, and SLRLLSLHGNDISTLQEGIFAD. Residues 866–916 form the LRRCT 4 domain; the sequence is NPLYCDCHLRWLSSWVKTGYKEPGIARCAGPQDMEGKLLLTTPAKKFECQG. EGF-like domains follow at residues 927–962, 964–1003, 1005–1041, 1043–1081, 1083–1119, and 1127–1163; these read DLCLSSPCQNQGTCHNDPLEVYRCACPSGYKGRDCE, SLDSCSSGPCENGGTCHAQEGEDAPFTCSCPTGFEGPTCG, NTDDCVDHACANGGVCVDGVGNYTCQCPLQYEGKACE, LVDLCSPDLNPCQHEAQCVGTPDGPRCECMPGYAGDNCS, NQDDCRDHRCQNGAQCMDEVNSYSCLCAEGYSGQLCE, and PKSPCEGTECQNGANCVDQGNRPVCQCLPGFGGPECE. 18 disulfides stabilise this stretch: Cys-929/Cys-940, Cys-934/Cys-950, Cys-952/Cys-961, Cys-968/Cys-979, Cys-973/Cys-991, Cys-993/Cys-1002, Cys-1009/Cys-1020, Cys-1014/Cys-1029, Cys-1031/Cys-1040, Cys-1047/Cys-1060, Cys-1054/Cys-1069, Cys-1071/Cys-1080, Cys-1087/Cys-1098, Cys-1092/Cys-1107, Cys-1109/Cys-1118, Cys-1131/Cys-1142, Cys-1136/Cys-1151, and Cys-1153/Cys-1162. An N-linked (GlcNAc...) asparagine glycan is attached at Asn-1026. Residue Asn-1079 is glycosylated (N-linked (GlcNAc...) asparagine). In terms of domain architecture, Laminin G-like spans 1166–1339; that stretch reads LSVNFVDRDT…QMKPGVVPGC (174 aa). N-linked (GlcNAc...) asparagine glycans are attached at residues Asn-1189, Asn-1259, and Asn-1306. Disulfide bonds link Cys-1313–Cys-1339, Cys-1342–Cys-1352, Cys-1347–Cys-1362, Cys-1364–Cys-1373, Cys-1381–Cys-1391, Cys-1386–Cys-1401, Cys-1403–Cys-1412, Cys-1422–Cys-1432, Cys-1427–Cys-1442, Cys-1444–Cys-1453, Cys-1459–Cys-1498, Cys-1477–Cys-1512, Cys-1488–Cys-1528, and Cys-1492–Cys-1530. 3 consecutive EGF-like domains span residues 1340–1374, 1377–1413, and 1418–1454; these read EPCRKLYCLHGICQPNATPGPMCHCEAGWVGLHCD, ADGPCHGHKCVHGQCVPLDALSYSCQCQDGYSGALCN, and LAEPCRGLQCLHGHCQASGTKGAHCVCDPGFSGELCE. A CTCK domain is found at 1459 to 1534; the sequence is CRGDPVRDFH…PTKCGCALCA (76 aa).

As to quaternary structure, interacts with ROBO1 and GREM1. Predominantly expressed in adult forebrain. Expressed in fetal brain, lung and kidney.

Its subcellular location is the secreted. Its function is as follows. Thought to act as molecular guidance cue in cellular migration, and function appears to be mediated by interaction with roundabout homolog receptors. During neural development involved in axonal navigation at the ventral midline of the neural tube and projection of axons to different regions. SLIT1 and SLIT2 together seem to be essential for midline guidance in the forebrain by acting as repulsive signal preventing inappropriate midline crossing by axons projecting from the olfactory bulb. The protein is Slit homolog 1 protein (SLIT1) of Homo sapiens (Human).